The sequence spans 518 residues: Allene oxide synthase, chloroplastic (518 aa).

The N-terminal 33 residues, 1–33 (MASISTPFPISLHPKTVRSKPLKFRVLTRPIKA), are a transit peptide targeting the chloroplast. Positions 133, 164, and 168 each coordinate heme b. Positions 321 and 389 each coordinate (13S)-hydroperoxy-(9Z,11E)-octadecadienoate. (13S)-hydroperoxy-(9Z,11E,15Z)-octadecatrienoate-binding residues include asparagine 321 and threonine 389. Residues lysine 469 and cysteine 471 each coordinate heme b.

Belongs to the cytochrome P450 family. Heme b is required as a cofactor.

The protein resides in the plastid. Its subcellular location is the chloroplast. It is found in the plastoglobule. The catalysed reaction is (13S)-hydroperoxy-(9Z,11E,15Z)-octadecatrienoate = (9Z,13S,15Z)-12,13-epoxyoctadeca-9,11,15-trienoate + H2O. It catalyses the reaction (13S)-hydroperoxy-(9Z,11E)-octadecadienoate = (9Z,13S)-12,13-epoxyoctadeca-9,11-dienoate + H2O. It participates in lipid metabolism; oxylipin biosynthesis. In terms of biological role, cytochrome P450 enzyme involved in the biosynthesis of oxylipin jasmonates, important phytohormones acting as growth regulators and signaling molecules for plant defense. Functions as an allene oxide synthase that converts hydroperoxy fatty acids to unstable allene epoxides. Catalyzes the dehydration of 13-HPOTE ((13S)-hydroperoxy-(9Z,11E,15Z)-octadecatrienoate), as well as 13-HPODE ((13S)-hydroperoxy-(9Z,11E)-octadecadienoate). The protein is Allene oxide synthase, chloroplastic (CYP74A) of Arabidopsis thaliana (Mouse-ear cress).